The chain runs to 589 residues: DNA ligase (589 aa).

E250 is a binding site for ATP. The N6-AMP-lysine intermediate role is filled by K252. ATP is bound by residues R257, R272, E302, F342, R417, and K423.

Belongs to the ATP-dependent DNA ligase family. The cofactor is Mg(2+).

It catalyses the reaction ATP + (deoxyribonucleotide)n-3'-hydroxyl + 5'-phospho-(deoxyribonucleotide)m = (deoxyribonucleotide)n+m + AMP + diphosphate.. Functionally, DNA ligase that seals nicks in double-stranded DNA during DNA replication, DNA recombination and DNA repair. This is DNA ligase from Cenarchaeum symbiosum (strain A).